The following is a 40-amino-acid chain: Large ribosomal subunit protein bL36A (40 aa).

This sequence belongs to the bacterial ribosomal protein bL36 family.

The polypeptide is Large ribosomal subunit protein bL36A (Saccharopolyspora erythraea (strain ATCC 11635 / DSM 40517 / JCM 4748 / NBRC 13426 / NCIMB 8594 / NRRL 2338)).